We begin with the raw amino-acid sequence, 177 residues long: Large ribosomal subunit protein bL9 (177 aa).

Residues 151–177 form a disordered region; that stretch reads EDEEIAEAAPVAEAQAEADGHSTEETA. The span at 157-167 shows a compositional bias: low complexity; sequence EAAPVAEAQAE. Basic and acidic residues predominate over residues 168 to 177; sequence ADGHSTEETA.

The protein belongs to the bacterial ribosomal protein bL9 family.

In terms of biological role, binds to the 23S rRNA. In Solidesulfovibrio magneticus (strain ATCC 700980 / DSM 13731 / RS-1) (Desulfovibrio magneticus), this protein is Large ribosomal subunit protein bL9.